Reading from the N-terminus, the 81-residue chain is Photosystem I iron-sulfur center (81 aa).

4Fe-4S ferredoxin-type domains lie at 2–31 (SHSV…MIPW) and 39–68 (IASA…VRVY). [4Fe-4S] cluster contacts are provided by cysteine 11, cysteine 14, cysteine 17, cysteine 21, cysteine 48, cysteine 51, cysteine 54, and cysteine 58.

In terms of assembly, the eukaryotic PSI reaction center is composed of at least 11 subunits. Requires [4Fe-4S] cluster as cofactor.

The protein localises to the plastid. Its subcellular location is the chloroplast thylakoid membrane. The catalysed reaction is reduced [plastocyanin] + hnu + oxidized [2Fe-2S]-[ferredoxin] = oxidized [plastocyanin] + reduced [2Fe-2S]-[ferredoxin]. Apoprotein for the two 4Fe-4S centers FA and FB of photosystem I (PSI); essential for photochemical activity. FB is the terminal electron acceptor of PSI, donating electrons to ferredoxin. The C-terminus interacts with PsaA/B/D and helps assemble the protein into the PSI complex. Required for binding of PsaD and PsaE to PSI. PSI is a plastocyanin-ferredoxin oxidoreductase, converting photonic excitation into a charge separation, which transfers an electron from the donor P700 chlorophyll pair to the spectroscopically characterized acceptors A0, A1, FX, FA and FB in turn. The protein is Photosystem I iron-sulfur center of Triticum aestivum (Wheat).